The following is a 178-amino-acid chain: Small ribosomal subunit protein uS4 (178 aa).

The S4 RNA-binding domain maps to 104-166; sequence RRLQTIVYRK…PNSPMASENH (63 aa). Positions 158 to 178 are disordered; the sequence is NSPMASENHPERTAAVSEENQ.

It belongs to the universal ribosomal protein uS4 family. In terms of assembly, part of the 30S ribosomal subunit. Contacts protein S5. The interaction surface between S4 and S5 is involved in control of translational fidelity.

Functionally, one of the primary rRNA binding proteins, it binds directly to 16S rRNA where it nucleates assembly of the body of the 30S subunit. In terms of biological role, with S5 and S12 plays an important role in translational accuracy. This is Small ribosomal subunit protein uS4 from Methanococcus maripaludis (strain C6 / ATCC BAA-1332).